Here is an 84-residue protein sequence, read N- to C-terminus: Small ribosomal subunit protein uS17 (84 aa).

The protein belongs to the universal ribosomal protein uS17 family. As to quaternary structure, part of the 30S ribosomal subunit.

Functionally, one of the primary rRNA binding proteins, it binds specifically to the 5'-end of 16S ribosomal RNA. This chain is Small ribosomal subunit protein uS17, found in Erwinia tasmaniensis (strain DSM 17950 / CFBP 7177 / CIP 109463 / NCPPB 4357 / Et1/99).